The primary structure comprises 175 residues: Large ribosomal subunit protein uL10 (175 aa).

The protein belongs to the universal ribosomal protein uL10 family. As to quaternary structure, part of the ribosomal stalk of the 50S ribosomal subunit. The N-terminus interacts with L11 and the large rRNA to form the base of the stalk. The C-terminus forms an elongated spine to which L12 dimers bind in a sequential fashion forming a multimeric L10(L12)X complex.

In terms of biological role, forms part of the ribosomal stalk, playing a central role in the interaction of the ribosome with GTP-bound translation factors. The protein is Large ribosomal subunit protein uL10 of Methylobacterium sp. (strain 4-46).